We begin with the raw amino-acid sequence, 312 residues long: Aspartate carbamoyltransferase catalytic subunit (312 aa).

R55 and T56 together coordinate carbamoyl phosphate. L-aspartate is bound at residue K83. The carbamoyl phosphate site is built by R105, H138, and Q141. L-aspartate-binding residues include R171 and R225. Residues G266 and P267 each coordinate carbamoyl phosphate.

Belongs to the aspartate/ornithine carbamoyltransferase superfamily. ATCase family. Heterododecamer (2C3:3R2) of six catalytic PyrB chains organized as two trimers (C3), and six regulatory PyrI chains organized as three dimers (R2).

The catalysed reaction is carbamoyl phosphate + L-aspartate = N-carbamoyl-L-aspartate + phosphate + H(+). It participates in pyrimidine metabolism; UMP biosynthesis via de novo pathway; (S)-dihydroorotate from bicarbonate: step 2/3. Its function is as follows. Catalyzes the condensation of carbamoyl phosphate and aspartate to form carbamoyl aspartate and inorganic phosphate, the committed step in the de novo pyrimidine nucleotide biosynthesis pathway. The sequence is that of Aspartate carbamoyltransferase catalytic subunit from Corynebacterium glutamicum (strain R).